The following is a 109-amino-acid chain: Putative transposase MJ0856.1 (109 aa).

Cys36, Cys39, Cys62, and Cys65 together coordinate Zn(2+).

The protein belongs to the transposase 35 family.

This chain is Putative transposase MJ0856.1, found in Methanocaldococcus jannaschii (strain ATCC 43067 / DSM 2661 / JAL-1 / JCM 10045 / NBRC 100440) (Methanococcus jannaschii).